Here is a 209-residue protein sequence, read N- to C-terminus: Ribosomal RNA large subunit methyltransferase E (209 aa).

The S-adenosyl-L-methionine site is built by G63, W65, D83, D99, and D124. The Proton acceptor role is filled by K164. Residues 191–209 enclose the TRAM domain; the sequence is EASRGRSREVYIVATGYKG.

It belongs to the class I-like SAM-binding methyltransferase superfamily. RNA methyltransferase RlmE family.

It is found in the cytoplasm. The enzyme catalyses uridine(2552) in 23S rRNA + S-adenosyl-L-methionine = 2'-O-methyluridine(2552) in 23S rRNA + S-adenosyl-L-homocysteine + H(+). Its function is as follows. Specifically methylates the uridine in position 2552 of 23S rRNA at the 2'-O position of the ribose in the fully assembled 50S ribosomal subunit. In Haemophilus influenzae (strain 86-028NP), this protein is Ribosomal RNA large subunit methyltransferase E.